A 480-amino-acid chain; its full sequence is Bindin (480 aa).

Positions 1 to 20 are cleaved as a signal peptide; it reads MDSQVLPLILLIIVFAASSA. Residues 21 to 247 constitute a propeptide that is removed on maturation; that stretch reads HGHFPHRTNQ…GEMRAERQRR (227 aa). The tract at residues 161-211 is disordered; the sequence is AEMRHRRSAKDDDVNKRASPRKGSSPAGKKVQIMEQDAGKGDAHNEKEVVK. Over residues 197 to 211 the composition is skewed to basic and acidic residues; the sequence is DAGKGDAHNEKEVVK. Residues 377 to 385 form a fucose-binding domain region; it reads LRHLRHHSN. Residues 431 to 451 traverse the membrane as a helical segment; that stretch reads GAGAVAGAAMAAGMPPYPGGA. The disordered stretch occupies residues 452 to 480; it reads QGGMRVGGQPQNPMGGNAYNPMTGYRQQG.

It belongs to the bindin family.

The protein localises to the cytoplasmic vesicle. It is found in the secretory vesicle. Its subcellular location is the acrosome membrane. In terms of biological role, species-specific sea urchin sperm protein required for adhesion of sperm to the egg surface during fertilization. Bindin coats the acrosomal process after it is externalized by the acrosome reaction. It binds to sulfated, fucose-containing polysaccharides on the vitelline layer receptor proteoglycans which cover the egg plasma membrane. This is Bindin from Arbacia punctulata (Punctuate sea urchin).